A 165-amino-acid chain; its full sequence is MLTYKNILIAVDGSHEAEWAFNKAVDVAKRNDAKLTIVNIIDSRTYSSYEVYDAQFTEKSRSFSEELLKGYQEVATRAGVTNVETRLEFGSPKAIIPKKLASELGVDLIMCGTSGLNAVERFIVGSVSEAIVRHAPCDVLVVRTEEIPEDFQPEVATPEFRKQYS.

It belongs to the universal stress protein A family.

The protein resides in the cytoplasm. This Staphylococcus haemolyticus (strain JCSC1435) protein is Putative universal stress protein SH1215.